The chain runs to 396 residues: 8-amino-7-oxononanoate synthase (396 aa).

Position 31 (R31) interacts with substrate. 118–119 (GY) serves as a coordination point for pyridoxal 5'-phosphate. Substrate is bound at residue H143. Positions 189, 217, and 245 each coordinate pyridoxal 5'-phosphate. K248 is subject to N6-(pyridoxal phosphate)lysine. A substrate-binding site is contributed by T362.

The protein belongs to the class-II pyridoxal-phosphate-dependent aminotransferase family. BioF subfamily. In terms of assembly, homodimer. The cofactor is pyridoxal 5'-phosphate.

The catalysed reaction is 6-carboxyhexanoyl-[ACP] + L-alanine + H(+) = (8S)-8-amino-7-oxononanoate + holo-[ACP] + CO2. Its pathway is cofactor biosynthesis; biotin biosynthesis. Its function is as follows. Catalyzes the decarboxylative condensation of pimeloyl-[acyl-carrier protein] and L-alanine to produce 8-amino-7-oxononanoate (AON), [acyl-carrier protein], and carbon dioxide. In Methylobacillus flagellatus (strain ATCC 51484 / DSM 6875 / VKM B-1610 / KT), this protein is 8-amino-7-oxononanoate synthase.